A 418-amino-acid polypeptide reads, in one-letter code: F420-non-reducing hydrogenase vhu subunit A (418 aa).

Residues C61 and C64 each coordinate Ni(2+).

Belongs to the [NiFe]/[NiFeSe] hydrogenase large subunit family. In terms of assembly, the F420-non-reducing hydrogenase vhu is composed of four subunits; VhuA, VhuD, VhuG and VhuU. Ni(2+) is required as a cofactor.

The chain is F420-non-reducing hydrogenase vhu subunit A (vhuA) from Methanocaldococcus jannaschii (strain ATCC 43067 / DSM 2661 / JAL-1 / JCM 10045 / NBRC 100440) (Methanococcus jannaschii).